A 387-amino-acid polypeptide reads, in one-letter code: Succinate--CoA ligase [ADP-forming] subunit beta (387 aa).

Residues 9–243 (KEILSTYGIP…YSQLDPLEIT (235 aa)) enclose the ATP-grasp domain. ATP is bound by residues Lys-45, 52–54 (GRG), Glu-98, Val-101, and Glu-106. Mg(2+)-binding residues include Asn-198 and Asp-212. Substrate is bound by residues Asn-263 and 320-322 (GIM).

This sequence belongs to the succinate/malate CoA ligase beta subunit family. As to quaternary structure, heterotetramer of two alpha and two beta subunits. Requires Mg(2+) as cofactor.

It catalyses the reaction succinate + ATP + CoA = succinyl-CoA + ADP + phosphate. The catalysed reaction is GTP + succinate + CoA = succinyl-CoA + GDP + phosphate. The protein operates within carbohydrate metabolism; tricarboxylic acid cycle; succinate from succinyl-CoA (ligase route): step 1/1. Succinyl-CoA synthetase functions in the citric acid cycle (TCA), coupling the hydrolysis of succinyl-CoA to the synthesis of either ATP or GTP and thus represents the only step of substrate-level phosphorylation in the TCA. The beta subunit provides nucleotide specificity of the enzyme and binds the substrate succinate, while the binding sites for coenzyme A and phosphate are found in the alpha subunit. This is Succinate--CoA ligase [ADP-forming] subunit beta from Trichlorobacter lovleyi (strain ATCC BAA-1151 / DSM 17278 / SZ) (Geobacter lovleyi).